The following is a 71-amino-acid chain: Large ribosomal subunit protein uL29 (71 aa).

It belongs to the universal ribosomal protein uL29 family.

This Roseiflexus sp. (strain RS-1) protein is Large ribosomal subunit protein uL29.